Consider the following 288-residue polypeptide: Quinate/shikimate dehydrogenase (288 aa).

K71 and D107 together coordinate substrate. NAD(+) contacts are provided by residues 132-135 (AGGA), 155-158 (NRRD), K205, 232-235 (CVYN), and G255.

Belongs to the shikimate dehydrogenase family. In terms of assembly, homodimer.

It carries out the reaction L-quinate + NAD(+) = 3-dehydroquinate + NADH + H(+). The catalysed reaction is L-quinate + NADP(+) = 3-dehydroquinate + NADPH + H(+). The enzyme catalyses shikimate + NADP(+) = 3-dehydroshikimate + NADPH + H(+). It catalyses the reaction shikimate + NAD(+) = 3-dehydroshikimate + NADH + H(+). It participates in metabolic intermediate biosynthesis; chorismate biosynthesis; chorismate from D-erythrose 4-phosphate and phosphoenolpyruvate: step 4/7. The actual biological function of YdiB remains unclear, nor is it known whether 3-dehydroshikimate or quinate represents the natural substrate. Catalyzes the reversible NAD-dependent reduction of both 3-dehydroshikimate (DHSA) and 3-dehydroquinate to yield shikimate (SA) and quinate, respectively. It can use both NAD or NADP for catalysis, however it has higher catalytic efficiency with NAD. The polypeptide is Quinate/shikimate dehydrogenase (Escherichia coli O7:K1 (strain IAI39 / ExPEC)).